Here is a 1083-residue protein sequence, read N- to C-terminus: Probable arabinosyltransferase B (1083 aa).

The next 13 membrane-spanning stretches (helical) occupy residues 23–45, 222–239, 252–274, 331–350, 357–379, 421–443, 456–478, 525–542, 555–572, 576–598, 611–633, 648–670, and 690–712; these read VARW…TPLL, FAMM…VALW, LIPA…FLLW, SMWI…LLLS, LGPA…LAAW, TAAF…LAGG, AVGA…TVVF, FGFL…LITL, AWRL…LTFA, WVHH…TVLV, AFLA…WWYV, DGIT…AYYL, and FWAP…MVAG.

It belongs to the emb family.

It is found in the cell membrane. Its function is as follows. Arabinosyl transferase responsible for the polymerization of arabinose into the arabinan of arabinogalactan. The polypeptide is Probable arabinosyltransferase B (embB) (Mycobacterium leprae (strain TN)).